A 576-amino-acid polypeptide reads, in one-letter code: Proline--tRNA ligase (576 aa).

This sequence belongs to the class-II aminoacyl-tRNA synthetase family. ProS type 1 subfamily. Homodimer.

The protein resides in the cytoplasm. The enzyme catalyses tRNA(Pro) + L-proline + ATP = L-prolyl-tRNA(Pro) + AMP + diphosphate. Its function is as follows. Catalyzes the attachment of proline to tRNA(Pro) in a two-step reaction: proline is first activated by ATP to form Pro-AMP and then transferred to the acceptor end of tRNA(Pro). As ProRS can inadvertently accommodate and process non-cognate amino acids such as alanine and cysteine, to avoid such errors it has two additional distinct editing activities against alanine. One activity is designated as 'pretransfer' editing and involves the tRNA(Pro)-independent hydrolysis of activated Ala-AMP. The other activity is designated 'posttransfer' editing and involves deacylation of mischarged Ala-tRNA(Pro). The misacylated Cys-tRNA(Pro) is not edited by ProRS. In Magnetococcus marinus (strain ATCC BAA-1437 / JCM 17883 / MC-1), this protein is Proline--tRNA ligase.